We begin with the raw amino-acid sequence, 510 residues long: MKLKGSLACLLLFLLLGSGEASPLQSGEENTREEVGEAIGHGVGEALGDVLGEAAIHGIEKAIGQGTGKTEGLGIREARDPHLGDALAHKLKEASHALKNTGSEADRQAENIIGHGVDPAHKSWQGTPGSNGAWGTNGQPPSGGHGIPGSQGSSGGPGDTQDQVFSGGSGGSFGANAQGGSWGQGGHRGAFNLGANSQGTSPQPGSVRSNNNRNTECTTPPGSGGSSGNSGGSSSSGSSTNGGGSSGGSNGGSNGSTSSNSGSSNGGGSSNSGGSNGGGSNGGGSSNGGGSNAGSSGSSGSSSDTRNSDHGGSSQGYNPSPSSGSRVGSGVRNKPECDNPHVSGGSGGQGQGSSGEGEAVSGINTLNSQTSSESFNFDTFWKNFKSKLGFINWDALNKGQAPPPSTRALLYFRRLWEDFKHNTPFLNWKVITEGEDLPSLQKRAGGAGQPGTGWQDAVAGTAKNYNYNQQGPPAALGGQYPAKTPAKGGVTVSSSASRTYPGLLQWVKFW.

The signal sequence occupies residues 1–21 (MKLKGSLACLLLFLLLGSGEA). A disordered region spans residues 117–362 (VDPAHKSWQG…SSGEGEAVSG (246 aa)). Residues 124–137 (WQGTPGSNGAWGTN) show a composition bias toward polar residues. The segment covering 141–158 (PSGGHGIPGSQGSSGGPG) has biased composition (gly residues). The span at 194-221 (GANSQGTSPQPGSVRSNNNRNTECTTPP) shows a compositional bias: polar residues. Gly residues-rich tracts occupy residues 222 to 231 (GSGGSSGNSG), 240 to 254 (TNGGGSSGGSNGGSN), and 264 to 292 (SNGGGSSNSGGSNGGGSNGGGSSNGGGSN). Composition is skewed to low complexity over residues 293–303 (AGSSGSSGSSS) and 319–332 (PSPSSGSRVGSGVR). A compositionally biased stretch (gly residues) spans 344–355 (GGSGGQGQGSSG).

It belongs to the dermokine family. In terms of assembly, homooligomer. Seems to be able to homodimerize and homotrimerize. O-glycosylated.

The protein resides in the secreted. May act as a soluble regulator of keratinocyte differentiation. The chain is Dermokine (DMKN) from Bos taurus (Bovine).